The following is a 426-amino-acid chain: F-box protein At2g15640 (426 aa).

The 48-residue stretch at 1-48 (MNPSTITNDLTVEILSRLPAKSVARFHCVSKQWGSIFGSPYFKELFLT) folds into the F-box domain.

In Arabidopsis thaliana (Mouse-ear cress), this protein is F-box protein At2g15640.